Here is a 57-residue protein sequence, read N- to C-terminus: UPF0391 membrane protein RB0084 (57 aa).

The next 2 helical transmembrane spans lie at 4 to 24 and 33 to 53; these read WALI…SGVS and ILFY…LAVG.

It belongs to the UPF0391 family.

The protein resides in the cell membrane. In Rhizobium meliloti (strain 1021) (Ensifer meliloti), this protein is UPF0391 membrane protein RB0084.